A 486-amino-acid chain; its full sequence is UDP-N-acetylmuramoyl-L-alanyl-D-glutamate--2,6-diaminopimelate ligase (486 aa).

Ser30 is a UDP-N-acetyl-alpha-D-muramoyl-L-alanyl-D-glutamate binding site. Residue 111 to 117 (GTNGKTT) coordinates ATP. Residues 153-154 (TT), Ser180, Gln186, and Arg188 each bind UDP-N-acetyl-alpha-D-muramoyl-L-alanyl-D-glutamate. Lys220 bears the N6-carboxylysine mark. Meso-2,6-diaminopimelate is bound by residues Arg378, 402–405 (DNPR), Gly455, and Glu459. Positions 402-405 (DNPR) match the Meso-diaminopimelate recognition motif motif.

This sequence belongs to the MurCDEF family. MurE subfamily. Requires Mg(2+) as cofactor. Carboxylation is probably crucial for Mg(2+) binding and, consequently, for the gamma-phosphate positioning of ATP.

It is found in the cytoplasm. The catalysed reaction is UDP-N-acetyl-alpha-D-muramoyl-L-alanyl-D-glutamate + meso-2,6-diaminopimelate + ATP = UDP-N-acetyl-alpha-D-muramoyl-L-alanyl-gamma-D-glutamyl-meso-2,6-diaminopimelate + ADP + phosphate + H(+). Its pathway is cell wall biogenesis; peptidoglycan biosynthesis. In terms of biological role, catalyzes the addition of meso-diaminopimelic acid to the nucleotide precursor UDP-N-acetylmuramoyl-L-alanyl-D-glutamate (UMAG) in the biosynthesis of bacterial cell-wall peptidoglycan. This is UDP-N-acetylmuramoyl-L-alanyl-D-glutamate--2,6-diaminopimelate ligase from Parabacteroides distasonis (strain ATCC 8503 / DSM 20701 / CIP 104284 / JCM 5825 / NCTC 11152).